The chain runs to 340 residues: Nuclear hormone receptor family member nhr-197 (340 aa).

A DNA-binding region (nuclear receptor) is located at residues 1–75 (MNCVVCSGRA…VGMTLAPLND (75 aa)). 2 consecutive NR C4-type zinc fingers follow at residues 3-23 (CVVCSGRATNRNYGAMSCFAC) and 39-58 (CKRIQNCTIHFKIFPKCRAC). The NR LBD domain occupies 98–337 (KNDKNYSHFV…KRIMQDLFSN (240 aa)).

Belongs to the nuclear hormone receptor family.

It localises to the nucleus. Functionally, orphan nuclear receptor. The protein is Nuclear hormone receptor family member nhr-197 (nhr-197) of Caenorhabditis elegans.